The primary structure comprises 385 residues: 8-amino-7-oxononanoate synthase (385 aa).

R21 lines the substrate pocket. A pyridoxal 5'-phosphate-binding site is contributed by 108-109 (GF). Position 133 (H133) interacts with substrate. 3 residues coordinate pyridoxal 5'-phosphate: S179, H207, and T233. K236 carries the post-translational modification N6-(pyridoxal phosphate)lysine. T352 lines the substrate pocket.

It belongs to the class-II pyridoxal-phosphate-dependent aminotransferase family. BioF subfamily. In terms of assembly, homodimer. Requires pyridoxal 5'-phosphate as cofactor.

The catalysed reaction is 6-carboxyhexanoyl-[ACP] + L-alanine + H(+) = (8S)-8-amino-7-oxononanoate + holo-[ACP] + CO2. It functions in the pathway cofactor biosynthesis; biotin biosynthesis. Catalyzes the decarboxylative condensation of pimeloyl-[acyl-carrier protein] and L-alanine to produce 8-amino-7-oxononanoate (AON), [acyl-carrier protein], and carbon dioxide. The protein is 8-amino-7-oxononanoate synthase of Salmonella paratyphi A (strain ATCC 9150 / SARB42).